The following is a 194-amino-acid chain: Peptidyl-tRNA hydrolase (194 aa).

A tRNA-binding site is contributed by tyrosine 16. Histidine 21 serves as the catalytic Proton acceptor. Residues phenylalanine 67, asparagine 69, and asparagine 115 each coordinate tRNA.

Belongs to the PTH family. Monomer.

It is found in the cytoplasm. The catalysed reaction is an N-acyl-L-alpha-aminoacyl-tRNA + H2O = an N-acyl-L-amino acid + a tRNA + H(+). Hydrolyzes ribosome-free peptidyl-tRNAs (with 1 or more amino acids incorporated), which drop off the ribosome during protein synthesis, or as a result of ribosome stalling. Functionally, catalyzes the release of premature peptidyl moieties from peptidyl-tRNA molecules trapped in stalled 50S ribosomal subunits, and thus maintains levels of free tRNAs and 50S ribosomes. This is Peptidyl-tRNA hydrolase from Escherichia coli O81 (strain ED1a).